A 521-amino-acid polypeptide reads, in one-letter code: 2,3-bisphosphoglycerate-independent phosphoglycerate mutase 2 (521 aa).

Asp20 and Ser70 together coordinate Mn(2+). The active-site Phosphoserine intermediate is Ser70. Substrate contacts are provided by residues His131, 161–162 (RD), Arg193, Arg199, 270–273 (RPDR), and Lys343. Residues Asp410, His414, Asp451, His452, and His470 each coordinate Mn(2+).

Belongs to the BPG-independent phosphoglycerate mutase family. It depends on Mn(2+) as a cofactor.

It carries out the reaction (2R)-2-phosphoglycerate = (2R)-3-phosphoglycerate. Its pathway is carbohydrate degradation; glycolysis; pyruvate from D-glyceraldehyde 3-phosphate: step 3/5. Its function is as follows. Catalyzes the interconversion of 2-phosphoglycerate and 3-phosphoglycerate. The polypeptide is 2,3-bisphosphoglycerate-independent phosphoglycerate mutase 2 (Methanosarcina acetivorans (strain ATCC 35395 / DSM 2834 / JCM 12185 / C2A)).